The chain runs to 1026 residues: Maternal effect protein staufen (1026 aa).

Over residues 16–29 (AAHHHSHSHAHMHL) the composition is skewed to basic residues. 3 disordered regions span residues 16 to 159 (AAHH…QLPP), 190 to 210 (NHYG…SNYA), and 234 to 311 (TPVP…KDKT). Positions 70 to 111 (AQQQQQQQTSSNQAGAVAAAGAAYHHGNINSNSGSNISSNSN) are enriched in low complexity. A compositionally biased stretch (polar residues) spans 112 to 126 (QMQKIRQQHQHLSSS). Composition is skewed to low complexity over residues 192–210 (YGSN…SNYA) and 234–256 (TPVP…NSTV). The span at 267–284 (TSQKPETRQEPASADDHV) shows a compositional bias: basic and acidic residues. Over residues 285-303 (STGNIDATGALSNEDTSSS) the composition is skewed to polar residues. DRBM domains follow at residues 311–378 (TPMC…ETMY) and 490–557 (PKFP…VLKT). Phosphoserine is present on residues serine 563 and serine 570. Positions 578–645 (SPISQVHEIG…AEKMLVELQK (68 aa)) constitute a DRBM 3 domain. Residues histidine 606, lysine 608, lysine 628, lysine 629, and lysine 632 each contribute to the RNA site. The tract at residues 647–707 (PPLTPTKQTP…PPKDKLIDMD (61 aa)) is disordered. Residues threonine 650 and threonine 655 each carry the phosphothreonine modification. Position 676 is a phosphoserine (serine 676). A compositionally biased stretch (polar residues) spans 678–688 (VSGTDGPTQTG). Residues 711–781 (NPITKLIQLQ…AQALFELLEA (71 aa)) form the DRBM 4 domain. The interval 855–948 (ESKEEEANKE…SNSTSNTQSA (94 aa)) is disordered. Residues 864-890 (EVAVAAEENSNNSANSGDSSNSSSGDS) show a composition bias toward low complexity. Over residues 891 to 901 (QATEAASESAL) the composition is skewed to polar residues. 2 stretches are compositionally biased toward low complexity: residues 902–920 (NTST…SNVG) and 934–947 (NTES…NTQS). The DRBM 5 domain occupies 951–1018 (HMKEQLLYLS…ASNALKILSK (68 aa)).

Component of neuronal ribonucleoprotein complexes (RNPs) that contains at least various translational repressor and mRNA turnover proteins such as me31B, tral, Upf1, AGO2 and sometimes Fmr1. As to expression, polar granules at the posterior pole of the oocyte, and by the time the egg is laid, at the anterior pole.

The protein localises to the cytoplasm. It localises to the cytoplasmic ribonucleoprotein granule. RNA-binding protein which forms ribonucleoprotein complexes (RNPs) that play critical roles in the localization, translational repression and turnover of RNAs during embryogenesis, neurotransmission and neurogenesis. In the oocyte, essential for the localization of both the osk/oskar mRNA to the posterior pole and bcd/bicoid RNA to the anterior pole, and is therefore required for the correct anterior-posterior patterning of the developing embryo. Association with osk or bcd at their respective poles, appears to promote the formation and stabilization of the ribonucleoprotein complexes. Integral component of diverse neuritic ribonucleoprotein complexes (RNPs) that mediate the transport, translation and turnover of neuronal RNAs during neuorgenesis and the translation repression of synaptic transcripts in preparation for their dendritic targeting. The polypeptide is Maternal effect protein staufen (stau) (Drosophila melanogaster (Fruit fly)).